A 692-amino-acid chain; its full sequence is Phenoloxidase subunit 2 (692 aa).

The propeptide occupies 1 to 97; sequence MTDRVKSLQL…PRHQEMATEV (97 aa). 3 residues coordinate Cu cation: histidine 213, histidine 217, and histidine 243. N-linked (GlcNAc...) asparagine glycans are attached at residues asparagine 256, asparagine 295, and asparagine 309. Glutamate 351 (proton acceptor) is an active-site residue. 3 residues coordinate Cu cation: histidine 366, histidine 370, and histidine 406. Asparagine 494 is a glycosylation site (N-linked (GlcNAc...) asparagine). Cystine bridges form between cysteine 583-cysteine 628 and cysteine 585-cysteine 635.

Belongs to the tyrosinase family. As to quaternary structure, heterodimer. Cu(2+) serves as cofactor.

It localises to the secreted. The enzyme catalyses L-tyrosine + O2 = L-dopaquinone + H2O. The catalysed reaction is 2 L-dopa + O2 = 2 L-dopaquinone + 2 H2O. Its function is as follows. Copper-containing oxidase that functions in the formation of pigments such as melanins and other polyphenolic compounds. Catalyzes the rate-limiting conversions of tyrosine to DOPA, DOPA to DOPA-quinone and possibly 5,6 dihydroxyindole to indole-5'6 quinone. Binds to the surface of hemocytes and is involved in hemocyte melanization. Binds the A.niger cell wall component alpha-1,3-glucan, a fungal pathogen-associated molecular pattern (PAMP) that activates the host immune response. The chain is Phenoloxidase subunit 2 from Galleria mellonella (Greater wax moth).